We begin with the raw amino-acid sequence, 432 residues long: Gamma-glutamyl phosphate reductase (432 aa).

The protein belongs to the gamma-glutamyl phosphate reductase family.

It localises to the cytoplasm. The enzyme catalyses L-glutamate 5-semialdehyde + phosphate + NADP(+) = L-glutamyl 5-phosphate + NADPH + H(+). It participates in amino-acid biosynthesis; L-proline biosynthesis; L-glutamate 5-semialdehyde from L-glutamate: step 2/2. Its function is as follows. Catalyzes the NADPH-dependent reduction of L-glutamate 5-phosphate into L-glutamate 5-semialdehyde and phosphate. The product spontaneously undergoes cyclization to form 1-pyrroline-5-carboxylate. The sequence is that of Gamma-glutamyl phosphate reductase from Deinococcus radiodurans (strain ATCC 13939 / DSM 20539 / JCM 16871 / CCUG 27074 / LMG 4051 / NBRC 15346 / NCIMB 9279 / VKM B-1422 / R1).